Reading from the N-terminus, the 81-residue chain is Photosystem I iron-sulfur center (81 aa).

4Fe-4S ferredoxin-type domains are found at residues 2 to 31 (SHAVKIYDTCIGCTQCVRACPLDVLEMVPW) and 37 to 68 (GQIASSPRTEDCVGCKRCETACPTDFLSIRVY). Positions 11, 14, 17, 21, 48, 51, 54, and 58 each coordinate [4Fe-4S] cluster.

The cyanobacterial PSI reaction center is composed of one copy each of PsaA,B,C,D,E,F,I,J,K,L,M and X, and forms trimeric complexes. It depends on [4Fe-4S] cluster as a cofactor.

The protein resides in the cellular thylakoid membrane. The enzyme catalyses reduced [plastocyanin] + hnu + oxidized [2Fe-2S]-[ferredoxin] = oxidized [plastocyanin] + reduced [2Fe-2S]-[ferredoxin]. Functionally, apoprotein for the two 4Fe-4S centers FA and FB of photosystem I (PSI); essential for photochemical activity. FB is the terminal electron acceptor of PSI, donating electrons to ferredoxin. The C-terminus interacts with PsaA/B/D and helps assemble the protein into the PSI complex. Required for binding of PsaD and PsaE to PSI. PSI is a plastocyanin/cytochrome c6-ferredoxin oxidoreductase, converting photonic excitation into a charge separation, which transfers an electron from the donor P700 chlorophyll pair to the spectroscopically characterized acceptors A0, A1, FX, FA and FB in turn. The protein is Photosystem I iron-sulfur center of Synechococcus sp. (strain WH7803).